The sequence spans 779 residues: Endonuclease MutS2 (779 aa).

328–335 is an ATP binding site; sequence GPNTGGKT. In terms of domain architecture, Smr spans 704 to 779; sequence LDLRGKRYEE…GSGATIVTLG (76 aa).

This sequence belongs to the DNA mismatch repair MutS family. MutS2 subfamily. As to quaternary structure, homodimer. Binds to stalled ribosomes, contacting rRNA.

Its function is as follows. Endonuclease that is involved in the suppression of homologous recombination and thus may have a key role in the control of bacterial genetic diversity. Acts as a ribosome collision sensor, splitting the ribosome into its 2 subunits. Detects stalled/collided 70S ribosomes which it binds and splits by an ATP-hydrolysis driven conformational change. Acts upstream of the ribosome quality control system (RQC), a ribosome-associated complex that mediates the extraction of incompletely synthesized nascent chains from stalled ribosomes and their subsequent degradation. Probably generates substrates for RQC. This Streptococcus pyogenes serotype M5 (strain Manfredo) protein is Endonuclease MutS2.